The chain runs to 88 residues: UPF0250 protein Sama_2593 (88 aa).

This sequence belongs to the UPF0250 family.

The sequence is that of UPF0250 protein Sama_2593 from Shewanella amazonensis (strain ATCC BAA-1098 / SB2B).